A 425-amino-acid chain; its full sequence is Serine--tRNA ligase (425 aa).

229 to 231 provides a ligand contact to L-serine; sequence TSE. Residues 259 to 261 and V275 contribute to the ATP site; that span reads RKE. E282 contributes to the L-serine binding site. 349-352 contacts ATP; it reads EVTS. T384 serves as a coordination point for L-serine.

This sequence belongs to the class-II aminoacyl-tRNA synthetase family. Type-1 seryl-tRNA synthetase subfamily. In terms of assembly, homodimer. The tRNA molecule binds across the dimer.

Its subcellular location is the cytoplasm. It catalyses the reaction tRNA(Ser) + L-serine + ATP = L-seryl-tRNA(Ser) + AMP + diphosphate + H(+). The catalysed reaction is tRNA(Sec) + L-serine + ATP = L-seryl-tRNA(Sec) + AMP + diphosphate + H(+). It participates in aminoacyl-tRNA biosynthesis; selenocysteinyl-tRNA(Sec) biosynthesis; L-seryl-tRNA(Sec) from L-serine and tRNA(Sec): step 1/1. In terms of biological role, catalyzes the attachment of serine to tRNA(Ser). Is also able to aminoacylate tRNA(Sec) with serine, to form the misacylated tRNA L-seryl-tRNA(Sec), which will be further converted into selenocysteinyl-tRNA(Sec). The chain is Serine--tRNA ligase from Borreliella burgdorferi (strain ATCC 35210 / DSM 4680 / CIP 102532 / B31) (Borrelia burgdorferi).